The primary structure comprises 308 residues: Insoluble matrix shell protein 4 (308 aa).

3 disordered regions span residues 1–21 (HGNGYNSNNGNGYNSNNGNGY), 47–104 (NTNS…PNAV), and 134–250 (YDSN…NTNS). A compositionally biased stretch (low complexity) spans 47-99 (NTNSLNGNNNGNSNNNGNGNNNGNSNNNGNGNNNGNTNNGNSYDSNTNDDSNS).

In terms of tissue distribution, component of the acid-insoluble organic matrix of the calcified shell.

The protein localises to the secreted. In Ruditapes philippinarum (Japanese carpet shell), this protein is Insoluble matrix shell protein 4.